The sequence spans 531 residues: NADH-quinone oxidoreductase subunit N (531 aa).

The next 13 membrane-spanning stretches (helical) occupy residues 13–33, 45–65, 85–105, 150–170, 200–220, 242–262, 289–309, 310–330, 339–359, 365–385, 415–435, 460–480, and 496–516; these read LAPILIVLGAAVLGVLIEAFA, LALLAAAGAFGAIAWRWAEVI, PALAAQGIIAILAFVGILVIA, LFSVGGMLVFPAAGDLLTLFI, YFLLGAFSSALLLFGIALLYG, GLLVVGLVLLISGLLFKVGAV, VAAFGALLRVVYVVAPAMTWD, IQPFLWVVAVLTMVVGTVLAI, LAYSSVAHAGFLLVGVVAMSP, VFFYLLAYGLATIGAFALVAL, VATVFALYLLSFAGIPLTSGF, ASAAAAFFYVRIIVLMFFTSP, and GFTAVAVALTAAATLVLGVWP.

The protein belongs to the complex I subunit 2 family. In terms of assembly, NDH-1 is composed of 14 different subunits. Subunits NuoA, H, J, K, L, M, N constitute the membrane sector of the complex.

The protein resides in the cell membrane. The enzyme catalyses a quinone + NADH + 5 H(+)(in) = a quinol + NAD(+) + 4 H(+)(out). Its function is as follows. NDH-1 shuttles electrons from NADH, via FMN and iron-sulfur (Fe-S) centers, to quinones in the respiratory chain. The immediate electron acceptor for the enzyme in this species is believed to be a menaquinone. Couples the redox reaction to proton translocation (for every two electrons transferred, four hydrogen ions are translocated across the cytoplasmic membrane), and thus conserves the redox energy in a proton gradient. This is NADH-quinone oxidoreductase subunit N from Beutenbergia cavernae (strain ATCC BAA-8 / DSM 12333 / CCUG 43141 / JCM 11478 / NBRC 16432 / NCIMB 13614 / HKI 0122).